We begin with the raw amino-acid sequence, 44 residues long: METLLLSRLPEAYVVFSPIVDVLPIIPVFFLLLAFVWQAAIGFR.

Residues 1–7 constitute a propeptide that is removed on maturation; the sequence is METLLLS. A helical membrane pass occupies residues 23-43; sequence LPIIPVFFLLLAFVWQAAIGF.

Belongs to the PsbK family. As to quaternary structure, PSII is composed of 1 copy each of membrane proteins PsbA, PsbB, PsbC, PsbD, PsbE, PsbF, PsbH, PsbI, PsbJ, PsbK, PsbL, PsbM, PsbT, PsbX, PsbY, PsbZ, Psb30/Ycf12, at least 3 peripheral proteins of the oxygen-evolving complex and a large number of cofactors. It forms dimeric complexes.

The protein resides in the plastid. It is found in the chloroplast thylakoid membrane. In terms of biological role, one of the components of the core complex of photosystem II (PSII). PSII is a light-driven water:plastoquinone oxidoreductase that uses light energy to abstract electrons from H(2)O, generating O(2) and a proton gradient subsequently used for ATP formation. It consists of a core antenna complex that captures photons, and an electron transfer chain that converts photonic excitation into a charge separation. This chain is Photosystem II reaction center protein K, found in Phaeodactylum tricornutum (strain CCAP 1055/1).